A 331-amino-acid polypeptide reads, in one-letter code: Tetraacyldisaccharide 4'-kinase (331 aa).

60-67 (TVGGTGKT) lines the ATP pocket.

Belongs to the LpxK family.

It catalyses the reaction a lipid A disaccharide + ATP = a lipid IVA + ADP + H(+). It functions in the pathway glycolipid biosynthesis; lipid IV(A) biosynthesis; lipid IV(A) from (3R)-3-hydroxytetradecanoyl-[acyl-carrier-protein] and UDP-N-acetyl-alpha-D-glucosamine: step 6/6. Transfers the gamma-phosphate of ATP to the 4'-position of a tetraacyldisaccharide 1-phosphate intermediate (termed DS-1-P) to form tetraacyldisaccharide 1,4'-bis-phosphate (lipid IVA). This Pseudomonas syringae pv. syringae (strain B728a) protein is Tetraacyldisaccharide 4'-kinase.